A 780-amino-acid chain; its full sequence is ATP-dependent DNA helicase RecG (780 aa).

Domain stretches follow at residues 1 to 350 (MLCS…GGIP), 351 to 549 (KKIE…EMPP), and 550 to 780 (GRKE…IEVG). The interval 154 to 252 (RKIFKLNDLL…VTPKEGEYVR (99 aa)) is wedge domain. 8 residues coordinate ATP: Phe-367, Leu-369, Gly-399, Ser-400, Gly-401, Lys-402, Thr-403, and Arg-436. A Helicase ATP-binding domain is found at 383–544 (DMISEKPMNR…FYGDLDVTVI (162 aa)). Positions 497–500 (DEQH) match the DEAH box motif. The 166-residue stretch at 563-728 (RVNEVYEFVR…EYDLKTRGPG (166 aa)) folds into the Helicase C-terminal domain.

It belongs to the helicase family. RecG subfamily. As to quaternary structure, monomer.

It carries out the reaction Couples ATP hydrolysis with the unwinding of duplex DNA by translocating in the 3'-5' direction.. It catalyses the reaction ATP + H2O = ADP + phosphate + H(+). Plays a critical role in recombination and DNA repair. Helps process Holliday junction intermediates to mature products by catalyzing branch migration. Has replication fork (Y-DNA) regression activity, unwinds stalled or blocked replication forks to make a HJ that can be resolved. Has a DNA unwinding activity characteristic of a DNA helicase with 3'-5' polarity. Might be a DNA translocase rather than a bona fide helicase. In Thermotoga maritima (strain ATCC 43589 / DSM 3109 / JCM 10099 / NBRC 100826 / MSB8), this protein is ATP-dependent DNA helicase RecG.